We begin with the raw amino-acid sequence, 158 residues long: NADH-quinone oxidoreductase subunit B (158 aa).

Residues cysteine 37, cysteine 38, cysteine 102, and cysteine 132 each contribute to the [4Fe-4S] cluster site.

It belongs to the complex I 20 kDa subunit family. NDH-1 is composed of 14 different subunits. Subunits NuoB, C, D, E, F, and G constitute the peripheral sector of the complex. [4Fe-4S] cluster serves as cofactor.

The protein localises to the cell inner membrane. It catalyses the reaction a quinone + NADH + 5 H(+)(in) = a quinol + NAD(+) + 4 H(+)(out). NDH-1 shuttles electrons from NADH, via FMN and iron-sulfur (Fe-S) centers, to quinones in the respiratory chain. The immediate electron acceptor for the enzyme in this species is believed to be ubiquinone. Couples the redox reaction to proton translocation (for every two electrons transferred, four hydrogen ions are translocated across the cytoplasmic membrane), and thus conserves the redox energy in a proton gradient. In Acidithiobacillus ferrooxidans (strain ATCC 23270 / DSM 14882 / CIP 104768 / NCIMB 8455) (Ferrobacillus ferrooxidans (strain ATCC 23270)), this protein is NADH-quinone oxidoreductase subunit B.